The following is a 374-amino-acid chain: MSQRDYYEVLGVARDASEDEIKRQYRKLALQYHPDRNPDNPEAEQMFKEAAEAYDVLRDADKRARYDRFGHAGLNGNGGGHGFANADDVFAHFSDIFGDLFGFATGSSRMRGPRPQAGADLRYNLSISFRQAAKGDEVTLRLPKKVTCDECNGSGAAAGTKPETCRHCGGNGQIRQSQGFFQIAVPCPVCRGEGQVIPTPCPKCKGSGILQQVRELAVRIPAGVDTGNRLRLRGEGEPGLHGGPPGDLYVVVSVEQDKTFRRQGQDLVITHEVSFVQAALGDRIEVPTLDDPVTLDIPKGTQSGEVFRLTDQGLPYLGHHQKGDLLVEVRVLTPVSLTKKQEELLREFAKLEEGKPFEKVKKVARKIGKAMGME.

In terms of domain architecture, J spans 5-70 (DYYEVLGVAR…DKRARYDRFG (66 aa)). The CR-type zinc finger occupies 135 to 213 (GDEVTLRLPK…CKGSGILQQV (79 aa)). The Zn(2+) site is built by cysteine 148, cysteine 151, cysteine 165, cysteine 168, cysteine 187, cysteine 190, cysteine 201, and cysteine 204. CXXCXGXG motif repeat units follow at residues 148 to 155 (CDECNGSG), 165 to 172 (CRHCGGNG), 187 to 194 (CPVCRGEG), and 201 to 208 (CPKCKGSG).

It belongs to the DnaJ family. Homodimer. Zn(2+) serves as cofactor.

The protein resides in the cytoplasm. Its function is as follows. Participates actively in the response to hyperosmotic and heat shock by preventing the aggregation of stress-denatured proteins and by disaggregating proteins, also in an autonomous, DnaK-independent fashion. Unfolded proteins bind initially to DnaJ; upon interaction with the DnaJ-bound protein, DnaK hydrolyzes its bound ATP, resulting in the formation of a stable complex. GrpE releases ADP from DnaK; ATP binding to DnaK triggers the release of the substrate protein, thus completing the reaction cycle. Several rounds of ATP-dependent interactions between DnaJ, DnaK and GrpE are required for fully efficient folding. Also involved, together with DnaK and GrpE, in the DNA replication of plasmids through activation of initiation proteins. The sequence is that of Chaperone protein DnaJ from Nitratidesulfovibrio vulgaris (strain DSM 19637 / Miyazaki F) (Desulfovibrio vulgaris).